A 530-amino-acid polypeptide reads, in one-letter code: Autoinducer-2 kinase (530 aa).

It belongs to the FGGY kinase family.

Its subcellular location is the cytoplasm. It catalyses the reaction (S)-4,5-dihydroxypentane-2,3-dione + ATP = (2S)-2-hydroxy-3,4-dioxopentyl phosphate + ADP + H(+). Its function is as follows. Catalyzes the phosphorylation of autoinducer-2 (AI-2) to phospho-AI-2, which subsequently inactivates the transcriptional regulator LsrR and leads to the transcription of the lsr operon. Phosphorylates the ring-open form of (S)-4,5-dihydroxypentane-2,3-dione (DPD), which is the precursor to all AI-2 signaling molecules, at the C5 position. In Yersinia pestis bv. Antiqua (strain Angola), this protein is Autoinducer-2 kinase.